The sequence spans 654 residues: Glycogen debranching enzyme (654 aa).

Asp-336 serves as the catalytic Nucleophile. Catalysis depends on Glu-371, which acts as the Proton donor. The disordered stretch occupies residues 459-484; sequence EANGEENRDGTNSNYSDNHGKEGLGG.

This sequence belongs to the glycosyl hydrolase 13 family.

The catalysed reaction is Hydrolysis of (1-&gt;6)-alpha-D-glucosidic linkages to branches with degrees of polymerization of three or four glucose residues in limit dextrin.. The protein operates within glycan degradation; glycogen degradation. Its function is as follows. Removes maltotriose and maltotetraose chains that are attached by 1,6-alpha-linkage to the limit dextrin main chain, generating a debranched limit dextrin. The sequence is that of Glycogen debranching enzyme from Salmonella typhi.